The primary structure comprises 178 residues: Large ribosomal subunit protein uL6 (178 aa).

It belongs to the universal ribosomal protein uL6 family. In terms of assembly, part of the 50S ribosomal subunit.

Functionally, this protein binds to the 23S rRNA, and is important in its secondary structure. It is located near the subunit interface in the base of the L7/L12 stalk, and near the tRNA binding site of the peptidyltransferase center. The protein is Large ribosomal subunit protein uL6 of Corynebacterium kroppenstedtii (strain DSM 44385 / JCM 11950 / CIP 105744 / CCUG 35717).